We begin with the raw amino-acid sequence, 401 residues long: Multidrug resistance protein MdtH (401 aa).

11 consecutive transmembrane segments (helical) span residues tyrosine 13 to isoleucine 33, serine 34 to leucine 54, methionine 78 to leucine 95, proline 99 to phenylalanine 116, leucine 139 to leucine 159, phenylalanine 165 to leucine 185, valine 214 to isoleucine 234, alanine 243 to isoleucine 263, phenylalanine 289 to leucine 309, leucine 340 to glycine 360, and isoleucine 365 to histidine 385.

This sequence belongs to the major facilitator superfamily. DHA1 family. MdtH (TC 2.A.1.2.21) subfamily.

It is found in the cell inner membrane. This chain is Multidrug resistance protein MdtH, found in Photorhabdus laumondii subsp. laumondii (strain DSM 15139 / CIP 105565 / TT01) (Photorhabdus luminescens subsp. laumondii).